Reading from the N-terminus, the 188-residue chain is Putative glutamine amidotransferase-like protein YvdE homolog (188 aa).

One can recognise a Glutamine amidotransferase type-1 domain in the interval 17–188; that stretch reads SPFWWNKVSY…IKDLGQGLQA (172 aa).

This chain is Putative glutamine amidotransferase-like protein YvdE homolog, found in Lactococcus lactis subsp. cremoris (Streptococcus cremoris).